Here is a 426-residue protein sequence, read N- to C-terminus: Serine hydroxymethyltransferase (426 aa).

(6S)-5,6,7,8-tetrahydrofolate-binding positions include L113 and 117–119 (GHL). K222 bears the N6-(pyridoxal phosphate)lysine mark. 363 to 365 (SPF) provides a ligand contact to (6S)-5,6,7,8-tetrahydrofolate.

This sequence belongs to the SHMT family. In terms of assembly, homodimer. It depends on pyridoxal 5'-phosphate as a cofactor.

The protein localises to the cytoplasm. It carries out the reaction (6R)-5,10-methylene-5,6,7,8-tetrahydrofolate + glycine + H2O = (6S)-5,6,7,8-tetrahydrofolate + L-serine. It participates in one-carbon metabolism; tetrahydrofolate interconversion. The protein operates within amino-acid biosynthesis; glycine biosynthesis; glycine from L-serine: step 1/1. Functionally, catalyzes the reversible interconversion of serine and glycine with tetrahydrofolate (THF) serving as the one-carbon carrier. This reaction serves as the major source of one-carbon groups required for the biosynthesis of purines, thymidylate, methionine, and other important biomolecules. Also exhibits THF-independent aldolase activity toward beta-hydroxyamino acids, producing glycine and aldehydes, via a retro-aldol mechanism. This Azobacteroides pseudotrichonymphae genomovar. CFP2 protein is Serine hydroxymethyltransferase.